The chain runs to 377 residues: Chaperone protein DnaJ (377 aa).

In terms of domain architecture, J spans 5 to 69; sequence EFYDRLGVSK…QKRSAYDQYG (65 aa). The segment at 133 to 215 adopts a CR-type zinc-finger fold; the sequence is GVEKDVSYHR…CHGTGHEKET (83 aa). Zn(2+)-binding residues include Cys146, Cys149, Cys163, Cys166, Cys189, Cys192, Cys203, and Cys206. 4 CXXCXGXG motif repeats span residues 146–153, 163–170, 189–196, and 203–210; these read CHTCAGSG, CGRCHGSG, CDVCHGSG, and CQTCHGTG.

It belongs to the DnaJ family. As to quaternary structure, homodimer. Zn(2+) serves as cofactor.

The protein localises to the cytoplasm. In terms of biological role, participates actively in the response to hyperosmotic and heat shock by preventing the aggregation of stress-denatured proteins and by disaggregating proteins, also in an autonomous, DnaK-independent fashion. Unfolded proteins bind initially to DnaJ; upon interaction with the DnaJ-bound protein, DnaK hydrolyzes its bound ATP, resulting in the formation of a stable complex. GrpE releases ADP from DnaK; ATP binding to DnaK triggers the release of the substrate protein, thus completing the reaction cycle. Several rounds of ATP-dependent interactions between DnaJ, DnaK and GrpE are required for fully efficient folding. Also involved, together with DnaK and GrpE, in the DNA replication of plasmids through activation of initiation proteins. The protein is Chaperone protein DnaJ of Streptococcus uberis (strain ATCC BAA-854 / 0140J).